The sequence spans 378 residues: Succinate--CoA ligase [ADP-forming] subunit beta (378 aa).

An ATP-grasp domain is found at 9-237; that stretch reads RDIVARYGIP…IAGEPESEIK (229 aa). ATP-binding positions include Lys-45, 52–54, Ile-94, and Glu-99; that span reads GRG. Mg(2+) is bound by residues Asn-192 and Asp-206. Substrate is bound by residues Asn-257 and 314–316; that span reads GIT.

It belongs to the succinate/malate CoA ligase beta subunit family. In terms of assembly, heterotetramer of two alpha and two beta subunits. It depends on Mg(2+) as a cofactor.

The enzyme catalyses succinate + ATP + CoA = succinyl-CoA + ADP + phosphate. It catalyses the reaction GTP + succinate + CoA = succinyl-CoA + GDP + phosphate. It participates in carbohydrate metabolism; tricarboxylic acid cycle; succinate from succinyl-CoA (ligase route): step 1/1. Functionally, succinyl-CoA synthetase functions in the citric acid cycle (TCA), coupling the hydrolysis of succinyl-CoA to the synthesis of either ATP or GTP and thus represents the only step of substrate-level phosphorylation in the TCA. The beta subunit provides nucleotide specificity of the enzyme and binds the substrate succinate, while the binding sites for coenzyme A and phosphate are found in the alpha subunit. The chain is Succinate--CoA ligase [ADP-forming] subunit beta from Herpetosiphon aurantiacus (strain ATCC 23779 / DSM 785 / 114-95).